A 343-amino-acid polypeptide reads, in one-letter code: Dihydroorotate dehydrogenase (quinone) (343 aa).

FMN contacts are provided by residues 61–65 and Thr-85; that span reads AGLDK. Lys-65 is a binding site for substrate. 110 to 114 contacts substrate; sequence NRMGF. Positions 138 and 171 each coordinate FMN. Asn-171 lines the substrate pocket. Catalysis depends on Ser-174, which acts as the Nucleophile. A substrate-binding site is contributed by Asn-176. Residues Lys-216 and Thr-244 each contribute to the FMN site. 245–246 serves as a coordination point for substrate; that stretch reads NT. FMN is bound by residues Gly-267, Gly-296, and 317-318; that span reads YS.

Belongs to the dihydroorotate dehydrogenase family. Type 2 subfamily. As to quaternary structure, monomer. FMN serves as cofactor.

Its subcellular location is the cell membrane. It carries out the reaction (S)-dihydroorotate + a quinone = orotate + a quinol. It functions in the pathway pyrimidine metabolism; UMP biosynthesis via de novo pathway; orotate from (S)-dihydroorotate (quinone route): step 1/1. In terms of biological role, catalyzes the conversion of dihydroorotate to orotate with quinone as electron acceptor. The chain is Dihydroorotate dehydrogenase (quinone) from Pseudomonas syringae pv. syringae (strain B728a).